The following is a 381-amino-acid chain: Lysophosphatidylserine lipase ABHD12 (381 aa).

At 1-58 the chain is on the cytoplasmic side; the sequence is MRKRNESVTVEHERAAAAPAPLDKGCSLRHSLRLPAADTGMKRPLGRRHGLWFRLRRL. Residues 59–79 traverse the membrane as a helical segment; it reads IIWLLGVYIAIPFLVKLCPAI. At 80 to 381 the chain is on the extracellular side; the sequence is QAKLVFLNFV…LGIPEHEHHH (302 aa). A glycan (N-linked (GlcNAc...) asparagine) is linked at asparagine 106. Serine 229 (nucleophile) is an active-site residue. Residues aspartate 316 and histidine 355 each act as charge relay system in the active site.

Belongs to the serine esterase family.

It localises to the endoplasmic reticulum membrane. The catalysed reaction is 1-(9Z-octadecenoyl)-sn-glycero-3-phospho-L-serine + H2O = sn-glycero-3-phospho-L-serine + (9Z)-octadecenoate + H(+). It catalyses the reaction 1-(9Z-octadecenoyl)-sn-glycero-3-phospho-(1'-sn-glycerol) + H2O = sn-glycero-3-phospho-(1'-sn-glycerol) + (9Z)-octadecenoate + H(+). It carries out the reaction 1-(9Z-octadecenoyl)-sn-glycero-3-phospho-(1D-myo-inositol) + H2O = sn-glycero-3-phospho-1D-myo-inositol + (9Z)-octadecenoate + H(+). The enzyme catalyses 1-(9Z-octadecenoyl)-sn-glycero-3-phosphoethanolamine + H2O = sn-glycero-3-phosphoethanolamine + (9Z)-octadecenoate + H(+). The catalysed reaction is 1-(9Z-octadecenoyl)-sn-glycero-3-phosphocholine + H2O = 1-(9Z-octadecenoyl)-sn-glycerol + phosphocholine + H(+). It catalyses the reaction 2-(9Z-octadecenoyl)-glycerol + H2O = glycerol + (9Z)-octadecenoate + H(+). It carries out the reaction 1-hexadecanoyl-sn-glycero-3-phospho-L-serine + H2O = sn-glycero-3-phospho-L-serine + hexadecanoate + H(+). The enzyme catalyses 2-(5Z,8Z,11Z,14Z-eicosatetraenoyl)-glycerol + H2O = glycerol + (5Z,8Z,11Z,14Z)-eicosatetraenoate + H(+). The catalysed reaction is Hydrolyzes glycerol monoesters of long-chain fatty acids.. It catalyses the reaction 1-decanoylglycerol + H2O = decanoate + glycerol + H(+). It carries out the reaction 1-dodecanoylglycerol + H2O = dodecanoate + glycerol + H(+). The enzyme catalyses 1-tetradecanoylglycerol + H2O = tetradecanoate + glycerol + H(+). The catalysed reaction is 2-hexadecanoylglycerol + H2O = glycerol + hexadecanoate + H(+). It catalyses the reaction 1-(9Z-octadecenoyl)-glycerol + H2O = glycerol + (9Z)-octadecenoate + H(+). It carries out the reaction 2-(9Z,12Z-octadecadienoyl)-glycerol + H2O = (9Z,12Z)-octadecadienoate + glycerol + H(+). The enzyme catalyses 1-(5Z,8Z,11Z,14Z-eicosatetraenoyl)-glycerol + H2O = glycerol + (5Z,8Z,11Z,14Z)-eicosatetraenoate + H(+). The catalysed reaction is 1-(9Z,12Z-octadecadienoyl)-glycerol + H2O = (9Z,12Z)-octadecadienoate + glycerol + H(+). It catalyses the reaction 1-hexadecanoylglycerol + H2O = glycerol + hexadecanoate + H(+). It carries out the reaction 1-octadecanoylglycerol + H2O = octadecanoate + glycerol + H(+). The enzyme catalyses 1-octadecanoyl-2-(9,10-epoxyoctadecanoyl)-sn-glycero-3-phospho-L-serine + H2O = 9,10-epoxyoctadecanoate + 1-octadecanoyl-sn-glycero-3-phosphoserine + H(+). The catalysed reaction is 1-octadecanoyl-2-(10-hydroxyoctadecanoyl)-sn-glycero-3-phospho-L-serine + H2O = 1-octadecanoyl-sn-glycero-3-phosphoserine + 10-hydroxyoctadecanoate + H(+). It catalyses the reaction 1-hexadecanoyl-2-(10-hydroxyoctadecanoyl)-sn-glycero-3-phospho-L-serine + H2O = 10-hydroxyoctadecanoate + 1-hexadecanoyl-sn-glycero-3-phospho-L-serine + H(+). In terms of biological role, lysophosphatidylserine (LPS) lipase that mediates the hydrolysis of lysophosphatidylserine, a class of signaling lipids that regulates immunological and neurological processes. Represents a major lysophosphatidylserine lipase in the brain, thereby playing a key role in the central nervous system. Also able to hydrolyze oxidized phosphatidylserine; oxidized phosphatidylserine is produced in response to severe inflammatory stress and constitutes a proapoptotic 'eat me' signal. Also has monoacylglycerol (MAG) lipase activity: hydrolyzes 2-arachidonoylglycerol (2-AG), thereby acting as a regulator of endocannabinoid signaling pathways. Has a strong preference for very-long-chain lipid substrates; substrate specificity is likely due to improved catalysis and not improved substrate binding. The polypeptide is Lysophosphatidylserine lipase ABHD12 (Gallus gallus (Chicken)).